A 94-amino-acid chain; its full sequence is Small ribosomal subunit protein uS17 (94 aa).

The protein belongs to the universal ribosomal protein uS17 family. In terms of assembly, part of the 30S ribosomal subunit.

One of the primary rRNA binding proteins, it binds specifically to the 5'-end of 16S ribosomal RNA. This is Small ribosomal subunit protein uS17 from Symbiobacterium thermophilum (strain DSM 24528 / JCM 14929 / IAM 14863 / T).